Here is a 165-residue protein sequence, read N- to C-terminus: MMQALGQGHIDADTYAQVLRRHHRLLAGFEEQLSDWLVTLVGSGWQYRRRVPALREDLRVLGQPVDAAVPPPASSEAARWGMLYVIEGSQLGGRVIARMLRKRQPGLAHALHYFELADEDPAGWRRFQAVLEQRLQSAAARADAIAGAQAMFAHFHTCLAAEARP.

Belongs to the heme oxygenase family.

It catalyses the reaction heme b + 3 reduced [NADPH--hemoprotein reductase] + 3 O2 = biliverdin IXalpha + CO + Fe(2+) + 3 oxidized [NADPH--hemoprotein reductase] + 3 H2O + H(+). Its function is as follows. Catalyzes the opening of the heme ring to form the open-chain tetrapyrrole biliverdin IX with the release of iron and carbon monoxide (CO). This Xanthomonas campestris pv. campestris (strain 8004) protein is Heme oxygenase (bphO).